A 351-amino-acid polypeptide reads, in one-letter code: Spindolin (351 aa).

The signal sequence occupies residues 1–20 (MNKFYYICIYINILYVCVSG).

Homodimer; disulfide-linked.

In terms of biological role, this protein is a spindle body protein. This Lepidoptera (butterflies and moths) protein is Spindolin.